Here is a 310-residue protein sequence, read N- to C-terminus: tRNA dimethylallyltransferase 2 (310 aa).

15–22 (GPTASGKT) provides a ligand contact to ATP. Residue 17–22 (TASGKT) participates in substrate binding. An interaction with substrate tRNA region spans residues 40–43 (DSMQ).

This sequence belongs to the IPP transferase family. In terms of assembly, monomer. The cofactor is Mg(2+).

It catalyses the reaction adenosine(37) in tRNA + dimethylallyl diphosphate = N(6)-dimethylallyladenosine(37) in tRNA + diphosphate. Functionally, catalyzes the transfer of a dimethylallyl group onto the adenine at position 37 in tRNAs that read codons beginning with uridine, leading to the formation of N6-(dimethylallyl)adenosine (i(6)A). The chain is tRNA dimethylallyltransferase 2 from Geotalea uraniireducens (strain Rf4) (Geobacter uraniireducens).